The following is a 173-amino-acid chain: MKREKKEQIVKDVAEKLQKAQGIYLTEFQGLDVEKMAELRNEFRKAGVEYQVAKNTLIKKALENVNGGDRLADGLVNTTGMAIGYDDPIAPAKIIEKFGKKNEMLKFKMATIDGSVFEADKLQVLSKMLSKTENIGRFAGMLNNVISSVPMVINAVMSDLVSVIDQVAKQKQD.

The protein belongs to the universal ribosomal protein uL10 family. In terms of assembly, part of the ribosomal stalk of the 50S ribosomal subunit. The N-terminus interacts with L11 and the large rRNA to form the base of the stalk. The C-terminus forms an elongated spine to which L12 dimers bind in a sequential fashion forming a multimeric L10(L12)X complex.

Functionally, forms part of the ribosomal stalk, playing a central role in the interaction of the ribosome with GTP-bound translation factors. The chain is Large ribosomal subunit protein uL10 from Chlorobium phaeobacteroides (strain BS1).